Here is a 552-residue protein sequence, read N- to C-terminus: MERFLRKYNISGDYANATRTFLAISPQWTCSHLKRNCLFNGMCVKQNFERAMIAATDAEEPAKAYKLVELAKEAMYDRETVWLQCFKSFSQPYEEDVEGKMKRCGAQLLEDYRKSGMMDEAVKQSALANSERVRLDDSLSAMPYIYVPIKEGQIVEPTFISRYRQIAYYFHNPDAADDWIDPNLFGIRGQHNQIQREVERQINTCPYTGYRGRVFQVMFLPIQLINFLRMDDFAKHFNRYASMAIQQYLRVGYAEEIRYVQQLFGRVPTGEFPLHQMMLMRRDFPTRDRSIVEARVRRSGDENWQSWLLPMIIIREGLDHQDRWEWFIDYMDRKHTCQLCYLKHSKQIPTCSVIDVRASELTGCSPFKMVKIEEHVGNDSVFKTKLVRDEQIGRIGDHYYTTNCYTGAEALVTTAIHIHRWIRGSGIWNDEGWQEGIFMLGRVLLRWELTKVQRSALLRLFCFVCYGYAPRADGTIPDWNNLGNFLDIILKGPELSEDEDERAYATMFEMVRCIITLCYAEKVHFAGSAAPACESGEVINLAARMSQMWMEY.

This sequence belongs to the orbivirus non-structural protein NS1 family.

The sequence is that of Non-structural protein NS1 (Segment-5) from Antilocapra americana (Pronghorn).